The primary structure comprises 144 residues: Large ribosomal subunit protein uL15 (144 aa).

Positions Met-1–Arg-59 are disordered. Gly residues predominate over residues Arg-21–His-35.

The protein belongs to the universal ribosomal protein uL15 family. Part of the 50S ribosomal subunit.

Its function is as follows. Binds to the 23S rRNA. The polypeptide is Large ribosomal subunit protein uL15 (Alteromonas mediterranea (strain DSM 17117 / CIP 110805 / LMG 28347 / Deep ecotype)).